Reading from the N-terminus, the 239-residue chain is MEFFNILQSACNDVNLDFNDKKYNQFISYKNLIQEWNKKINLTAIVEDEEIIKKHFIDCIKIFKSSPIGEAKSLIDIGTGAGFPGIPIKILKEDIEITLLDSLQKRINFLNIVIGELQLKNIQCLHGRAEDYAQEIQHRQKYDIAVSRAVANLAVLSEFCIPFVEKGGYFIAMKGPSVEEEITAATKSIEILGGKIEDIMKIDIEDTDLKHNLVIIKKVRETGKRYPRKPGIIKKNPLK.

S-adenosyl-L-methionine contacts are provided by residues G78, F83, 129–130, and R148; that span reads AE.

It belongs to the methyltransferase superfamily. RNA methyltransferase RsmG family.

The protein resides in the cytoplasm. In terms of biological role, specifically methylates the N7 position of a guanine in 16S rRNA. The chain is Ribosomal RNA small subunit methyltransferase G from Clostridium botulinum (strain 657 / Type Ba4).